We begin with the raw amino-acid sequence, 475 residues long: Ankyrin repeat, SAM and basic leucine zipper domain-containing protein 1 (475 aa).

The segment covering 1–10 has biased composition (low complexity); that stretch reads MAAGALRGLA. The tract at residues 1 to 23 is disordered; sequence MAAGALRGLAVAGGGESSESEDD. Phosphoserine occurs at positions 17, 18, and 20. ANK repeat units follow at residues 45–74, 78–107, 110–144, 148–177, 181–210, and 214–243; these read EKNETFKKALTTGDISLVQELLDSGISVDS, YGWTPLMYAASVANVELVRVLLDRGANASF, DKQTILITACSARGLEEQILKCVELLLSRNADPNV, RLMTPIMYAARDGHPQVVALLVAHGAEVNT, NGYTALTWAARQGHKNVVLKLLELGANKML, and DGKIPSEIAKRNKHLEIFNFLSLTLNPLEG. An SAM domain is found at 272-334; the sequence is SYTAFGDLEI…KILSALKELE (63 aa).

Interacts with DDX4, PIWIL1, RANBP9 and TDRD1.

The protein localises to the cytoplasm. Plays a central role during spermatogenesis by repressing transposable elements and preventing their mobilization, which is essential for the germline integrity. Acts via the piRNA metabolic process, which mediates the repression of transposable elements during meiosis by forming complexes composed of piRNAs and Piwi proteins and governs the methylation and subsequent repression of transposons. Its association with pi-bodies suggests a participation in the primary piRNAs metabolic process. Required prior to the pachytene stage to facilitate the production of multiple types of piRNAs, including those associated with repeats involved in the regulation of retrotransposons. May act by mediating protein-protein interactions during germ cell maturation. The polypeptide is Ankyrin repeat, SAM and basic leucine zipper domain-containing protein 1 (ASZ1) (Otolemur garnettii (Small-eared galago)).